A 119-amino-acid polypeptide reads, in one-letter code: Large ribosomal subunit protein bL20 (119 aa).

This sequence belongs to the bacterial ribosomal protein bL20 family.

Binds directly to 23S ribosomal RNA and is necessary for the in vitro assembly process of the 50S ribosomal subunit. It is not involved in the protein synthesizing functions of that subunit. This Dechloromonas aromatica (strain RCB) protein is Large ribosomal subunit protein bL20.